The sequence spans 1225 residues: MSKVKATAEKCQLNISRIQSLLSQLEKVNAESLLFDTDNTRYVTAKIFHLAQTQEKTRKEMTAKGSTGIEVILCTLENTRDLQTILNILNILNELASTAGGRRINALISKGGARILLQLLLSASKESPSNEELMIVLHSLLAKLGPKDKKFGVKARVSGALNISLNLVKQNLQNPRLILPCLQVLRVCCMNSVNSAYLGKNGAVEILFKIIGPFTRRNTGLIKVSLDTLAALLKSRTNARKAVDRAYVQTLISTYMDWHRHDTRHRHMLIRKGILQCLKSITNIKIGRKAFIDANGMKTLYNTSQECQAVRTLDPLVNTSSLIMRKCFPKNRLPLPTIKSAFQFQLPFMPTSGPVALLYSMPPEVDDVVDESDDNEDTDAETEAEAENEDSDQICKNDDIETDITKLIPGQELGRTLEDLKMYERFFPELTEDFQEFDLVSNEPKPGAKLGPIIVPTAGEEQPEVPNNFMKNLARRSCNISLEDESNQRPTFLDMSKNVTNKGNSLDQKVHVDKDGSCYYYSNDIVRDLEKLSLHKASGNHPCRNGCVSAKDKPNFLPHPCNKSTSSSISCSNSLFEKHSMHLGPLCCSGIAPDDDESSPLDEQVMREMTDFDSILPLHDPDLYIEIVKNTKSVPEYTEVAYPDYFGHVPPFFKERLLERPYGVQRSKIFQDIERMIHPNDIIDRVIYDLDNPSCSAHDEIDILKFNSKFESGNLRKVIQIRKNEYDLILNSDINSNHYHQWFYFEVSGMRTGVAYRFNIINCEKSNSQFNYGMQPLMYSVQEALASRPWWYRVGTDICYYKNHFSRSSLATGGQKGKSYYTITFTVTFPHKDDVCYFAYHYPYTYSTLKMHLQKLESLHSPQQIYFRQEVLCETLGGNGCPVITITAMPESNYYEHVYQFRNRPYIFLTSRVHPGETNASWVMKGTLEFLMGSSATAQSLRESYIFKIVPMLNPDGVINGNHRCSLSGEDLNRQWQNPNSDLHPTIYHTKGLLQYLSAIKRVPLVYCDYHGHSRKKNVFMYGCSIKETVWHTNANAASCDMVEESGYKTLPKVLNQIAPAFSMSSCSFVVEKSKESTARVVVWKEIGVQRSYTMESTLCGCDQGKYKDLQIGTKELEEMGAKFCVGLLRLKRLTSPMELTLPPSLIDIENELIESSCKVASPTTYVLEDDEPRFIEEVDYSAESNDDVDPDLPENIGDFETSTLEEESFSDSEITRTHMSGQST.

Residues 366-392 show a composition bias toward acidic residues; sequence DDVVDESDDNEDTDAETEAEAENEDSD. A disordered region spans residues 366–398; the sequence is DDVVDESDDNEDTDAETEAEAENEDSDQICKND. Positions 842 to 1132 constitute a Peptidase M14 domain; the sequence is YPYTYSTLKM…KFCVGLLRLK (291 aa). 3 residues coordinate Zn(2+): H914, E917, and H1011. The active-site Proton donor/acceptor is E1096. The span at 1181-1193 shows a compositional bias: acidic residues; sequence YSAESNDDVDPDL. The interval 1181-1225 is disordered; sequence YSAESNDDVDPDLPENIGDFETSTLEEESFSDSEITRTHMSGQST.

This sequence belongs to the peptidase M14 family. Zn(2+) serves as cofactor.

It is found in the cytoplasm. It localises to the cytosol. Its subcellular location is the nucleus. The protein resides in the mitochondrion. It catalyses the reaction (L-glutamyl)(n+1)-gamma-L-glutamyl-L-glutamyl-[protein] + H2O = (L-glutamyl)(n)-gamma-L-glutamyl-L-glutamyl-[protein] + L-glutamate. It carries out the reaction C-terminal L-alpha-aminoacyl-L-glutamyl-L-glutamyl-[tubulin] + H2O = C-terminal L-alpha-aminoacyl-L-glutamyl-[tubulin] + L-glutamate. In terms of biological role, metallocarboxypeptidase that mediates protein deglutamylation of tubulin and non-tubulin target proteins. Catalyzes the removal of polyglutamate side chains present on the gamma-carboxyl group of glutamate residues within the C-terminal tail of alpha- and beta-tubulin. Specifically cleaves tubulin long-side-chains, while it is not able to remove the branching point glutamate. Also catalyzes the removal of polyglutamate residues from the carboxy-terminus of alpha-tubulin as well as non-tubulin proteins. This is Cytosolic carboxypeptidase 1 (agtpbp1) from Xenopus laevis (African clawed frog).